A 386-amino-acid chain; its full sequence is Phosphoglycerate kinase (386 aa).

Substrate-binding positions include 21-23 (DLN), Arg36, 59-62 (HLGR), Arg112, and Arg145. Residues Lys196, Glu313, and 339-342 (GGDT) contribute to the ATP site.

The protein belongs to the phosphoglycerate kinase family. In terms of assembly, monomer.

The protein localises to the cytoplasm. It catalyses the reaction (2R)-3-phosphoglycerate + ATP = (2R)-3-phospho-glyceroyl phosphate + ADP. The protein operates within carbohydrate degradation; glycolysis; pyruvate from D-glyceraldehyde 3-phosphate: step 2/5. The polypeptide is Phosphoglycerate kinase (pgk) (Haemophilus influenzae (strain ATCC 51907 / DSM 11121 / KW20 / Rd)).